A 310-amino-acid chain; its full sequence is Ribosomal RNA small subunit methyltransferase H (310 aa).

S-adenosyl-L-methionine is bound by residues 35–37 (GGH), Asp-52, Phe-79, Asp-100, and Gln-107.

The protein belongs to the methyltransferase superfamily. RsmH family.

The protein localises to the cytoplasm. It carries out the reaction cytidine(1402) in 16S rRNA + S-adenosyl-L-methionine = N(4)-methylcytidine(1402) in 16S rRNA + S-adenosyl-L-homocysteine + H(+). Its function is as follows. Specifically methylates the N4 position of cytidine in position 1402 (C1402) of 16S rRNA. This is Ribosomal RNA small subunit methyltransferase H from Anaeromyxobacter sp. (strain Fw109-5).